The primary structure comprises 175 residues: uncharacterized protein (175 aa).

Polar residues predominate over residues 1–10; the sequence is MSKKINNNKT. The disordered stretch occupies residues 1–21; the sequence is MSKKINNNKTPRNKVKNNNVS.

This is an uncharacterized protein from Ureaplasma parvum serovar 3 (strain ATCC 700970).